The sequence spans 472 residues: Maintenance of mitochondrial morphology protein 1 (472 aa).

Topologically, residues 1 to 22 (MAFQQGEAAPVSTQSSLSFTQG) are lumenal. Residues 23-43 (FLLGQLSVVLLIGAFIKFFIF) traverse the membrane as a helical segment. Over 44 to 472 (GEAPPPPSRG…GSMPEAPGAQ (429 aa)) the chain is Cytoplasmic. Disordered regions lie at residues 51-92 (SRGL…VPSS), 270-303 (LHTPSPMPSPPTAGAQPAAGAQPTDGGDIPPKSS), and 370-472 (RMGR…PGAQ). Over residues 81 to 92 (STSNVLRPVPSS) the composition is skewed to polar residues. Residues 124-365 (QPESLDWFNV…EPRVQVVGLP (242 aa)) form the SMP-LTD domain. A compositionally biased stretch (pro residues) spans 270-280 (LHTPSPMPSPP). Residues 281–297 (TAGAQPAAGAQPTDGGD) are compositionally biased toward low complexity. Residues 450–460 (TRERSLGDDFH) are compositionally biased toward basic and acidic residues.

The protein belongs to the MMM1 family. In terms of assembly, homodimer. Component of the ER-mitochondria encounter structure (ERMES) or MDM complex, composed of mmm1, mdm10, mdm12 and mdm34. A mmm1 homodimer associates with one molecule of mdm12 on each side in a pairwise head-to-tail manner, and the SMP-LTD domains of mmm1 and mdm12 generate a continuous hydrophobic tunnel for phospholipid trafficking.

It localises to the endoplasmic reticulum membrane. In terms of biological role, component of the ERMES/MDM complex, which serves as a molecular tether to connect the endoplasmic reticulum (ER) and mitochondria. Components of this complex are involved in the control of mitochondrial shape and protein biogenesis, and function in nonvesicular lipid trafficking between the ER and mitochondria. The mdm12-mmm1 subcomplex functions in the major beta-barrel assembly pathway that is responsible for biogenesis of all outer membrane beta-barrel proteins, and acts in a late step after the SAM complex. The mdm10-mdm12-mmm1 subcomplex further acts in the TOM40-specific pathway after the action of the mdm12-mmm1 complex. Essential for establishing and maintaining the structure of mitochondria and maintenance of mtDNA nucleoids. This chain is Maintenance of mitochondrial morphology protein 1, found in Emericella nidulans (strain FGSC A4 / ATCC 38163 / CBS 112.46 / NRRL 194 / M139) (Aspergillus nidulans).